A 477-amino-acid polypeptide reads, in one-letter code: tRNA-2-methylthio-N(6)-dimethylallyladenosine synthase (477 aa).

Residues 3–120 (KKLHIKTWGC…LPTMIKQVQE (118 aa)) enclose the MTTase N-terminal domain. Residues cysteine 12, cysteine 49, cysteine 83, cysteine 157, cysteine 161, and cysteine 164 each contribute to the [4Fe-4S] cluster site. In terms of domain architecture, Radical SAM core spans 143–375 (RAEGATAFVS…QHVINNQSMQ (233 aa)). The TRAM domain occupies 378–441 (RAMLGSTQRI…PNSLRGKFLR (64 aa)).

Belongs to the methylthiotransferase family. MiaB subfamily. As to quaternary structure, monomer. The cofactor is [4Fe-4S] cluster.

The protein localises to the cytoplasm. The enzyme catalyses N(6)-dimethylallyladenosine(37) in tRNA + (sulfur carrier)-SH + AH2 + 2 S-adenosyl-L-methionine = 2-methylsulfanyl-N(6)-dimethylallyladenosine(37) in tRNA + (sulfur carrier)-H + 5'-deoxyadenosine + L-methionine + A + S-adenosyl-L-homocysteine + 2 H(+). Its function is as follows. Catalyzes the methylthiolation of N6-(dimethylallyl)adenosine (i(6)A), leading to the formation of 2-methylthio-N6-(dimethylallyl)adenosine (ms(2)i(6)A) at position 37 in tRNAs that read codons beginning with uridine. The chain is tRNA-2-methylthio-N(6)-dimethylallyladenosine synthase from Aeromonas hydrophila subsp. hydrophila (strain ATCC 7966 / DSM 30187 / BCRC 13018 / CCUG 14551 / JCM 1027 / KCTC 2358 / NCIMB 9240 / NCTC 8049).